Consider the following 243-residue polypeptide: Ornithine decarboxylase antizyme 3 (243 aa).

Residues serine 6, serine 9, and serine 12 each carry the phosphoserine modification.

The protein belongs to the ODC antizyme family. As to quaternary structure, interacts with ODC1 and thereby sterically blocks ODC homodimerization. Interacts with AZIN2; this interaction disrupts the interaction between the antizyme and ODC1. Interacts with GGN. In terms of tissue distribution, testis specific. Expressed throughout the differentiation process from spermatids to spermatozoa in the inner part of the seminiferous tubules.

Its subcellular location is the nucleus. The protein localises to the cytoplasm. Its function is as follows. Ornithine decarboxylase (ODC) antizyme protein that negatively regulates ODC activity and intracellular polyamine biosynthesis and uptake in response to increased intracellular polyamine levels. Binds to ODC monomers, inhibiting the assembly of the functional ODC homodimers. Does not target the ODC monomers for degradation, which allows a protein synthesis-independent restoration of ODC activity. Stabilizes AZIN2 by interfering with its ubiquitination. Involved in the translocation of AZNI2 from ER-Golgi intermediate compartment (ERGIC) to the cytosol. Probably plays a key role in spermatogenesis by regulating the intracellular concentration of polyamines in haploid germ cells. The chain is Ornithine decarboxylase antizyme 3 (Oaz3) from Mus musculus (Mouse).